Reading from the N-terminus, the 1026-residue chain is Multidrug resistance protein MdtC (1026 aa).

The next 11 helical transmembrane spans lie at 15-35 (ILIA…LPVA), 333-353 (EVEE…FLFL), 360-380 (LIPA…MYLC), 387-407 (LSLM…IVVL), 431-451 (VGFT…PLLL), 463-483 (FAVT…TLTP), 528-548 (LVGV…IAIP), 853-873 (LILI…LYES), 897-917 (LFNA…IGIV), 953-973 (PIMM…LSGG), and 984-1004 (ITIV…TPVV).

The protein belongs to the resistance-nodulation-cell division (RND) (TC 2.A.6) family. MdtC subfamily. As to quaternary structure, part of a tripartite efflux system composed of MdtA, MdtB and MdtC. MdtC forms a heteromultimer with MdtB.

It localises to the cell inner membrane. This chain is Multidrug resistance protein MdtC, found in Salmonella agona (strain SL483).